We begin with the raw amino-acid sequence, 186 residues long: Ribosome-recycling factor (186 aa).

Belongs to the RRF family.

Its subcellular location is the cytoplasm. In terms of biological role, responsible for the release of ribosomes from messenger RNA at the termination of protein biosynthesis. May increase the efficiency of translation by recycling ribosomes from one round of translation to another. In Methylocella silvestris (strain DSM 15510 / CIP 108128 / LMG 27833 / NCIMB 13906 / BL2), this protein is Ribosome-recycling factor.